Reading from the N-terminus, the 172-residue chain is Large ribosomal subunit protein uL10 (172 aa).

It belongs to the universal ribosomal protein uL10 family. In terms of assembly, part of the ribosomal stalk of the 50S ribosomal subunit. The N-terminus interacts with L11 and the large rRNA to form the base of the stalk. The C-terminus forms an elongated spine to which L12 dimers bind in a sequential fashion forming a multimeric L10(L12)X complex.

Forms part of the ribosomal stalk, playing a central role in the interaction of the ribosome with GTP-bound translation factors. This Rhodopseudomonas palustris (strain BisB5) protein is Large ribosomal subunit protein uL10.